The chain runs to 833 residues: Leucine--tRNA ligase (833 aa).

The 'HIGH' region signature appears at 41 to 52; that stretch reads PYPSGAGLHVGH. The short motif at 610-614 is the 'KMSKS' region element; that stretch reads KMSKS. An ATP-binding site is contributed by K613.

The protein belongs to the class-I aminoacyl-tRNA synthetase family.

The protein localises to the cytoplasm. It catalyses the reaction tRNA(Leu) + L-leucine + ATP = L-leucyl-tRNA(Leu) + AMP + diphosphate. This Streptococcus pneumoniae (strain CGSP14) protein is Leucine--tRNA ligase.